Consider the following 312-residue polypeptide: UDP-N-acetylenolpyruvoylglucosamine reductase (312 aa).

The FAD-binding PCMH-type domain maps to 37 to 205; it reads VGGPADALVV…VCAEFALCPG (169 aa). R185 is a catalytic residue. S234 (proton donor) is an active-site residue. E304 is an active-site residue.

The protein belongs to the MurB family. Requires FAD as cofactor.

The protein localises to the cytoplasm. It carries out the reaction UDP-N-acetyl-alpha-D-muramate + NADP(+) = UDP-N-acetyl-3-O-(1-carboxyvinyl)-alpha-D-glucosamine + NADPH + H(+). It functions in the pathway cell wall biogenesis; peptidoglycan biosynthesis. In terms of biological role, cell wall formation. In Syntrophus aciditrophicus (strain SB), this protein is UDP-N-acetylenolpyruvoylglucosamine reductase.